A 506-amino-acid chain; its full sequence is Peptidyl-prolyl cis-trans isomerase CYP59 (506 aa).

One can recognise a PPIase cyclophilin-type domain in the interval Met-1–Ile-161. The RRM domain occupies Asn-243–Ser-321. A CCHC-type zinc finger spans residues Gly-341–Gly-357. Basic and acidic residues-rich tracts occupy residues Glu-388–Gln-404 and Gly-412–Arg-506. Residues Glu-388–Arg-506 are disordered.

It belongs to the cyclophilin-type PPIase family. As to quaternary structure, component of the BZR1 complex. Interacts with NRPB1 (via CTD domain), SCL28, SCL30, SCL30A, SCL33, SC35, SR30, SR34, RSZ21, RS2Z33, RS31 and RS40. Ubiquitous.

The protein resides in the nucleus. It carries out the reaction [protein]-peptidylproline (omega=180) = [protein]-peptidylproline (omega=0). Functionally, PPIases accelerate the folding of proteins. It catalyzes the cis-trans isomerization of proline imidic peptide bonds in oligopeptides. Influences somehow regulation of RNA pol II (CTD) phosphorylation. Binds RNA with preferences for GC-rich sequences. Probably involved in activities connecting transcription and pre-mRNA processing. Involved in brassinostroid response. The polypeptide is Peptidyl-prolyl cis-trans isomerase CYP59 (CYP59) (Arabidopsis thaliana (Mouse-ear cress)).